The chain runs to 551 residues: MARGAEGGRGDAGWGLRGALAAVALLSALNAAGTVFALCQWRGLSSALRALEAQRGREQREDSALRSFLAELSRAPRGASAPPQDPASSARNKRSHSGEPAPHIRAESHDMLMMMTYSMVPIRVMVDLCNSTKGICLTGPSGPPGPPGAGGLPGHNGLDGQPGPQGPKGEKGANGKRGKMGIPGAAGNPGERGEKGDHGELGLQGNEGPPGQKGEKGDKGDVSNDVLLAGAKGDQGPPGPPGPPGPPGPPGPPGSRRAKGPRQPSMFNGQCPGETCAIPNDDTLVGKADEKASEHHSPQAESMITSIGNPVQVLKVTETFGTWIRESANKSDDRIWVTEHFSGIMVKEFKDQPSLLNGSYTFIHLPYYFHGCGHVVYNNSLYYHKGGSNTLVRFEFGQETSQTLKLENALYFDRKYLFANSKTYFNLAVDEKGLWIIYASSVDGSSILVAQLDERTFSVVQHVNTTYPKSKAGNAFIARGILYVTDTKDMRVTFAFDLLGGKQINANFDLRTSQSVLAMLAYNMRDQHLYSWEDGHLMLYPVQFLSTTLNQ.

Topologically, residues 1-17 (MARGAEGGRGDAGWGLR) are cytoplasmic. A helical; Signal-anchor for type II membrane protein membrane pass occupies residues 18–39 (GALAAVALLSALNAAGTVFALC). Over 40–551 (QWRGLSSALR…VQFLSTTLNQ (512 aa)) the chain is Extracellular. The segment at 72–107 (LSRAPRGASAPPQDPASSARNKRSHSGEPAPHIRAE) is disordered. The span at 79–90 (ASAPPQDPASSA) shows a compositional bias: low complexity. Residue N130 is glycosylated (N-linked (GlcNAc...) asparagine). Collagen-like domains lie at 137 to 195 (LTGP…RGEK) and 196 to 222 (GDHGELGLQGNEGPPGQKGEKGDKGDV). Positions 139-282 (GPSGPPGPPG…GETCAIPNDD (144 aa)) are disordered. Basic and acidic residues-rich tracts occupy residues 191-200 (ERGEKGDHGE) and 213-222 (KGEKGDKGDV). Over residues 237–253 (PPGPPGPPGPPGPPGPP) the composition is skewed to pro residues. An Olfactomedin-like domain is found at 299–546 (QAESMITSIG…LMLYPVQFLS (248 aa)). N-linked (GlcNAc...) asparagine glycans are attached at residues N329, N357, N378, and N464.

In terms of assembly, homotrimer (via collagen-like domains). Interacts with NRCAM and NFASC/neurofascin. Interaction with glial NRCAM enhances interaction with axonal NFASC. Interacts with MYOC. N-glycosylated. Post-translationally, proteolytic processing by a furin-like protease causes shedding of the ectodomain. Further cleavage by BMP1 releases the olfactomedin-like domain. In terms of tissue distribution, specifically expressed in spinal cord, brain, placenta and sciatic nerve. More abundant in peripheral than central nervous system.

The protein localises to the cell membrane. Its subcellular location is the cell projection. The protein resides in the axon. It localises to the secreted. It is found in the extracellular space. The protein localises to the extracellular matrix. Its function is as follows. Ligand for NRCAM and NFASC/neurofascin that plays a role in the formation and maintenance of the nodes of Ranvier on myelinated axons. Mediates interaction between Schwann cell microvilli and axons via its interactions with NRCAM and NFASC. Nodes of Ranvier contain clustered sodium channels that are crucial for the saltatory propagation of action potentials along myelinated axons. During development, nodes of Ranvier are formed by the fusion of two heminodes. Required for normal clustering of sodium channels at heminodes; not required for the formation of mature nodes with normal sodium channel clusters. Required, together with NRCAM, for maintaining NFASC and sodium channel clusters at mature nodes of Ranvier. The sequence is that of Gliomedin (GLDN) from Homo sapiens (Human).